Here is a 431-residue protein sequence, read N- to C-terminus: Enolase (431 aa).

Q163 contacts (2R)-2-phosphoglycerate. Catalysis depends on E205, which acts as the Proton donor. D242, E288, and D315 together coordinate Mg(2+). Positions 340, 369, 370, and 391 each coordinate (2R)-2-phosphoglycerate. Catalysis depends on K340, which acts as the Proton acceptor.

The protein belongs to the enolase family. It depends on Mg(2+) as a cofactor.

It is found in the cytoplasm. The protein resides in the secreted. It localises to the cell surface. It catalyses the reaction (2R)-2-phosphoglycerate = phosphoenolpyruvate + H2O. Its pathway is carbohydrate degradation; glycolysis; pyruvate from D-glyceraldehyde 3-phosphate: step 4/5. Its function is as follows. Catalyzes the reversible conversion of 2-phosphoglycerate (2-PG) into phosphoenolpyruvate (PEP). It is essential for the degradation of carbohydrates via glycolysis. This is Enolase from Bacillus cereus (strain AH187).